Reading from the N-terminus, the 150-residue chain is MKVIFLQDVKGKGKKGDVKEVPTGYAQNFLIKNGYAKEANKGSMSALAGQKKAQEKHEAEVLAQAKEMQAFLEDEKTVVEIKAKAGEDSRLFGSIPSKQIAEALNKQYNVKLDKRKIELANPIRSLGYTNVPVKLHHEVTAKIKVHVVAE.

It belongs to the bacterial ribosomal protein bL9 family.

Functionally, binds to the 23S rRNA. In Enterococcus faecalis (strain ATCC 700802 / V583), this protein is Large ribosomal subunit protein bL9.